A 449-amino-acid polypeptide reads, in one-letter code: MALTVKEEEFSNTLIKNASAFDRLKLGNLKNLKIQKKLQFLYLILFVLITGVFFFFLIGNFYSHRKLYQVIKNTKHTTIGFKIDRPHDKVLSSVLKNKLSTYVKESFKFFKSGYAQKGYLGSENDSIELDDVANLMFYGEGQIGTNKQPFMFIFDTGSANLWVPSVNCDSIGCSTKHLYDASASKSYEKDGTKVEISYGSGTVRGYFSKDVISLGDLSLPYKFIEVTDADDLEPIYSGSEFDGILGLGWKDLSIGSIDPVVVELKKQNKIDNALFTFYLPVHDKHVGYLTIGGIESDFYEGPLTYEKLNHDLYWQIDLDIHFGKYVMQKANAVVDSGTSTITAPTSFLNKFFTDMNVIKVPFLPLYVTTCDNDDLPTLEFHSRNNKYTLEPEFYMDPLSDIDPALCMLYILPVDIDDNTFILGDPFMRKYFTVFDYEKESVGFAVAKNL.

Topologically, residues 1–37 (MALTVKEEEFSNTLIKNASAFDRLKLGNLKNLKIQKK) are cytoplasmic. The propeptide occupies 1–121 (MALTVKEEEF…SGYAQKGYLG (121 aa)). The helical; Signal-anchor for type II membrane protein transmembrane segment at 38 to 58 (LQFLYLILFVLITGVFFFFLI) threads the bilayer. Residues 59–449 (GNFYSHRKLY…SVGFAVAKNL (391 aa)) lie on the Lumenal side of the membrane. The 308-residue stretch at 137 to 444 (FYGEGQIGTN…DYEKESVGFA (308 aa)) folds into the Peptidase A1 domain. D155 is an active-site residue. An intrachain disulfide couples C168 to C173. D335 is an active-site residue. C370 and C406 form a disulfide bridge.

It belongs to the peptidase A1 family. Component of the hemozoin formation complex (HFC) composed of falcipains FP2A and/or FP2B, plasmepsins PMII, PMIII/HAP and PMIV, heme detoxifying protein HDP and falcilysin FLN. The HFC complex is involved in hemoglobin degradation and detoxification of heme in the food vacuole during the asexual blood stage. Proteolytically cleaved into the soluble active mature form by cysteine proteases in the digestive vacuole of trophozoites. Proteolysis requires an acidic environment. Autoprocessing or transprocessing by other plasmepsins such as PMII may serve as an alternate activation system.

The protein resides in the membrane. The protein localises to the vacuole lumen. It catalyses the reaction Hydrolysis of the bonds linking certain hydrophobic residues in hemoglobin or globin. Also cleaves small molecules substrates such as Ala-Leu-Glu-Arg-Thr-Phe-|-Phe(NO2)-Ser-Phe-Pro-Thr.. Its activity is regulated as follows. Inhibited by pepstatin A. In terms of biological role, during the asexual blood stage, catalyzes the cleavage of denatured host hemoglobin (Hb) or globins. Digestion of host Hb is an essential step which provides the parasite with amino acids for protein synthesis, and regulates osmolarity. This Plasmodium falciparum (isolate HB3) protein is Plasmepsin IV.